The sequence spans 335 residues: Phosphatidylcholine-sterol acyltransferase (335 aa).

The N-terminal stretch at 1–18 (MKKWFVCLLGLVALTVQA) is a signal peptide. Catalysis depends on S34, which acts as the Nucleophile. Catalysis depends on residues D306 and H309.

Belongs to the 'GDSL' lipolytic enzyme family.

It catalyses the reaction a sterol + a 1,2-diacyl-sn-glycero-3-phosphocholine = a sterol ester + a 1-acyl-sn-glycero-3-phosphocholine. Fatty acid transfer between phosphatidylcholine and cholesterol. The sequence is that of Phosphatidylcholine-sterol acyltransferase from Aeromonas hydrophila.